Consider the following 578-residue polypeptide: Type I restriction enzyme MjaVIII methylase subunit (578 aa).

S-adenosyl-L-methionine-binding positions include 250–255 (EVYTPI), 280–282 (SGS), Glu-303, and 332–333 (DS).

The protein belongs to the N(4)/N(6)-methyltransferase family. The type I restriction/modification system is composed of three polypeptides R, M and S.

The enzyme catalyses a 2'-deoxyadenosine in DNA + S-adenosyl-L-methionine = an N(6)-methyl-2'-deoxyadenosine in DNA + S-adenosyl-L-homocysteine + H(+). Its function is as follows. The subtype gamma methyltransferase (M) subunit of a type I restriction enzyme. The M and S subunits together form a methyltransferase (MTase) that methylates A-2 on the top and A-3 on the bottom strand of the sequence 5'-GAYN(5)GTAA-3'. In the presence of the R subunit the complex can also act as an endonuclease, binding to the same target sequence but cutting the DNA some distance from this site. Whether the DNA is cut or modified depends on the methylation state of the target sequence. When the target site is unmodified, the DNA is cut. When the target site is hemimethylated, the complex acts as a maintenance MTase modifying the DNA so that both strands become methylated. After locating a non-methylated recognition site, the enzyme complex serves as a molecular motor that translocates DNA in an ATP-dependent manner until a collision occurs that triggers cleavage. In Methanocaldococcus jannaschii (strain ATCC 43067 / DSM 2661 / JAL-1 / JCM 10045 / NBRC 100440) (Methanococcus jannaschii), this protein is Type I restriction enzyme MjaVIII methylase subunit.